The sequence spans 149 residues: Protein Rv2250A (149 aa).

The protein is Protein Rv2250A of Mycobacterium tuberculosis (strain ATCC 25618 / H37Rv).